The chain runs to 206 residues: MDEDVLTTLKILIIGESGVGKSSLLLRFTDDTFDPELAATIGVDFKVKTISVDGNKAKLAIWDTAGQERFRTLTPSYYRGAQGVILVYDVTRRDTFVKLDNWLNELETYCTRNDIVNMLVGNKIDKENREVDRNEGLKFARKHSMLFIEASAKTCDGVQCAFEELVEKIIQTPGLWESENQNKGVKLTHREEGQGGGACGGYCSVL.

Met1 is modified (N-acetylmethionine). GTP is bound by residues Ser17, Gly20, Lys21, Ser22, Ser23, Asp34, Pro35, Thr40, Gly66, Lys123, and Asp125. Position 22 (Ser22) interacts with Mg(2+). 2 short sequence motifs (switch) span residues Asp31–Phe45 and Asp63–Gly80. Mg(2+) is bound at residue Thr40. Ser144 is modified (phosphoserine). Ala152 provides a ligand contact to GTP. Residue Cys199 is the site of S-palmitoyl cysteine attachment. Residue Cys203 is modified to Cysteine methyl ester. The S-geranylgeranyl cysteine moiety is linked to residue Cys203. Positions Ser204–Leu206 are cleaved as a propeptide — removed in mature form.

This sequence belongs to the small GTPase superfamily. Rab family. As to quaternary structure, interacts (in GTP-bound form) with ZFYVE1. Interacts with ZW10 and this interaction is enhanced in the presence of ZFYVE1. Interacts with BSCL2. Mg(2+) is required as a cofactor.

The protein localises to the endoplasmic reticulum membrane. It is found in the golgi apparatus. Its subcellular location is the cis-Golgi network membrane. The protein resides in the lipid droplet. It localises to the apical cell membrane. The catalysed reaction is GTP + H2O = GDP + phosphate + H(+). With respect to regulation, regulated by guanine nucleotide exchange factors (GEFs) which promote the exchange of bound GDP for free GTP. Regulated by GTPase activating proteins (GAPs) which increase the GTP hydrolysis activity at the ER membrane. Inhibited by GDP dissociation inhibitors (GDIs) which prevent Rab-GDP dissociation. Its function is as follows. The small GTPases Rab are key regulators of intracellular membrane trafficking, from the formation of transport vesicles to their fusion with membranes. Rabs cycle between an inactive GDP-bound form and an active GTP-bound form that is able to recruit to membranes different sets of downstream effectors directly responsible for vesicle formation, movement, tethering and fusion. RAB18 is required for the localization of ZFYVE1 to lipid droplets and for its function in mediating the formation of endoplasmic reticulum-lipid droplets (ER-LD) contacts. Also required for maintaining endoplasmic reticulum structure. Plays a role in apical endocytosis/recycling. Plays a key role in eye and brain development and neurodegeneration. The sequence is that of Ras-related protein Rab-18 (RAB18) from Bos taurus (Bovine).